Here is a 128-residue protein sequence, read N- to C-terminus: Ferric uptake regulation protein homolog (128 aa).

Belongs to the Fur family.

This is Ferric uptake regulation protein homolog from Archaeoglobus fulgidus (strain ATCC 49558 / DSM 4304 / JCM 9628 / NBRC 100126 / VC-16).